The primary structure comprises 195 residues: Cytochrome c oxidase subunit 1 (195 aa).

The chain crosses the membrane as a helical span at residues 12-32 (MYWVLGFIFLFTLGGLTGIVL). 2 residues coordinate Mg(2+): His42 and Asp43. His50 serves as a coordination point for heme a3. Fe(II)-heme a is bound at residue His52. Helical transmembrane passes span 59–79 (AVFA…GLVL), 88–108 (FIVM…LGLA), and 131–151 (GSLM…EAFL).

Belongs to the heme-copper respiratory oxidase family. In terms of assembly, component of the cytochrome c oxidase (complex IV, CIV), a multisubunit enzyme composed of a catalytic core of 3 subunits and several supernumerary subunits. The complex exists as a monomer or a dimer and forms supercomplexes (SCs) in the inner mitochondrial membrane with ubiquinol-cytochrome c oxidoreductase (cytochrome b-c1 complex, complex III, CIII). It depends on heme as a cofactor. Cu cation serves as cofactor.

It is found in the mitochondrion inner membrane. It catalyses the reaction 4 Fe(II)-[cytochrome c] + O2 + 8 H(+)(in) = 4 Fe(III)-[cytochrome c] + 2 H2O + 4 H(+)(out). The protein operates within energy metabolism; oxidative phosphorylation. Its function is as follows. Component of the cytochrome c oxidase, the last enzyme in the mitochondrial electron transport chain which drives oxidative phosphorylation. The respiratory chain contains 3 multisubunit complexes succinate dehydrogenase (complex II, CII), ubiquinol-cytochrome c oxidoreductase (cytochrome b-c1 complex, complex III, CIII) and cytochrome c oxidase (complex IV, CIV), that cooperate to transfer electrons derived from NADH and succinate to molecular oxygen, creating an electrochemical gradient over the inner membrane that drives transmembrane transport and the ATP synthase. Cytochrome c oxidase is the component of the respiratory chain that catalyzes the reduction of oxygen to water. Electrons originating from reduced cytochrome c in the intermembrane space (IMS) are transferred via the dinuclear copper A center (CU(A)) of subunit 2 and heme A of subunit 1 to the active site in subunit 1, a binuclear center (BNC) formed by heme A3 and copper B (CU(B)). The BNC reduces molecular oxygen to 2 water molecules using 4 electrons from cytochrome c in the IMS and 4 protons from the mitochondrial matrix. This is Cytochrome c oxidase subunit 1 (COI) from Albinaria turrita (Door snail).